The following is a 790-amino-acid chain: cAMP and cAMP-inhibited cGMP 3',5'-cyclic phosphodiesterase 10A (790 aa).

3',5'-cyclic AMP is bound by residues 290-291 (RC), 334-335 (IA), T368, Q387, and H519. The PDEase domain occupies 446–763 (TSEEWQGLMR…NQWEKVIRGE (318 aa)). H519 functions as the Proton donor in the catalytic mechanism. Residue H519 coordinates 3',5'-cyclic GMP. A divalent metal cation is bound by residues H523, H557, D558, and D668. Residue Q720 participates in 3',5'-cyclic AMP binding. Q720 contacts 3',5'-cyclic GMP. The segment at 768 to 790 (WISGPGPAPSKSTPEKLNVKVED) is disordered. Over residues 780–790 (TPEKLNVKVED) the composition is skewed to basic and acidic residues.

This sequence belongs to the cyclic nucleotide phosphodiesterase family. As to quaternary structure, homodimer. A divalent metal cation is required as a cofactor. In terms of tissue distribution, detected in striatum (at protein level). Detected in testis and brain.

It is found in the cytoplasm. It localises to the cytosol. It carries out the reaction a nucleoside 3',5'-cyclic phosphate + H2O = a nucleoside 5'-phosphate + H(+). It catalyses the reaction 3',5'-cyclic AMP + H2O = AMP + H(+). The enzyme catalyses 3',5'-cyclic GMP + H2O = GMP + H(+). It functions in the pathway purine metabolism; 3',5'-cyclic AMP degradation; AMP from 3',5'-cyclic AMP: step 1/1. The protein operates within purine metabolism; 3',5'-cyclic GMP degradation; GMP from 3',5'-cyclic GMP: step 1/1. In terms of biological role, plays a role in signal transduction by regulating the intracellular concentration of cyclic nucleotides. Can hydrolyze both cAMP and cGMP, but has higher affinity for cAMP and is more efficient with cAMP as substrate. May play a critical role in regulating cAMP and cGMP levels in the striatum, a region of the brain that contributes to the control of movement and cognition. The protein is cAMP and cAMP-inhibited cGMP 3',5'-cyclic phosphodiesterase 10A (Pde10a) of Mus musculus (Mouse).